Here is a 102-residue protein sequence, read N- to C-terminus: Protein RnfH (102 aa).

The protein belongs to the UPF0125 (RnfH) family.

The chain is Protein RnfH from Haemophilus influenzae (strain 86-028NP).